Here is a 417-residue protein sequence, read N- to C-terminus: NADH-quinone oxidoreductase subunit D (417 aa).

Belongs to the complex I 49 kDa subunit family. As to quaternary structure, NDH-1 is composed of 14 different subunits. Subunits NuoB, C, D, E, F, and G constitute the peripheral sector of the complex.

The protein resides in the cell inner membrane. It catalyses the reaction a quinone + NADH + 5 H(+)(in) = a quinol + NAD(+) + 4 H(+)(out). In terms of biological role, NDH-1 shuttles electrons from NADH, via FMN and iron-sulfur (Fe-S) centers, to quinones in the respiratory chain. The immediate electron acceptor for the enzyme in this species is believed to be ubiquinone. Couples the redox reaction to proton translocation (for every two electrons transferred, four hydrogen ions are translocated across the cytoplasmic membrane), and thus conserves the redox energy in a proton gradient. In Burkholderia ambifaria (strain MC40-6), this protein is NADH-quinone oxidoreductase subunit D.